Here is a 245-residue protein sequence, read N- to C-terminus: Endo-chitosanase (245 aa).

Residues 1–17 (MHFAGIVAIALATGATA) form the signal peptide.

Belongs to the glycosyl hydrolase 75 family.

The protein localises to the secreted. It carries out the reaction Endohydrolysis of beta-(1-&gt;4)-linkages between D-glucosamine residues in a partly acetylated chitosan.. Its function is as follows. Chitosanase catalyzing the endo-type cleavage of chitosan, the deacylated form of chitin. Chitosanase may be crucial in the degradation of the deacetylated portion of chitin in the fungal cell wall. Chitoolisaccharides produced by the hydrolysis of partially N-acetylated chitosan are known to have many biological activities, including antibacterial activity, immune-enhancing effects, and elicitor activity. The protein is Endo-chitosanase (csn) of Aspergillus oryzae (strain ATCC 42149 / RIB 40) (Yellow koji mold).